A 267-amino-acid polypeptide reads, in one-letter code: Tryptophan synthase alpha chain (267 aa).

Catalysis depends on proton acceptor residues Glu-49 and Asp-60.

Belongs to the TrpA family. Tetramer of two alpha and two beta chains.

The catalysed reaction is (1S,2R)-1-C-(indol-3-yl)glycerol 3-phosphate + L-serine = D-glyceraldehyde 3-phosphate + L-tryptophan + H2O. The protein operates within amino-acid biosynthesis; L-tryptophan biosynthesis; L-tryptophan from chorismate: step 5/5. The alpha subunit is responsible for the aldol cleavage of indoleglycerol phosphate to indole and glyceraldehyde 3-phosphate. This is Tryptophan synthase alpha chain from Geobacter sp. (strain M21).